Consider the following 1116-residue polypeptide: Pleckstrin homology domain-containing family A member 5 (1116 aa).

N-acetylalanine is present on Ala2. One can recognise a WW 1 domain in the interval 10–43 (ISLPRSWTYGITRGGRVFFINEEAKSTTWLHPVT). Ser55 is subject to Phosphoserine. The region spanning 56 to 89 (TDLPTGWEEAYTFEGARYYINHNERKVTCKHPVT) is the WW 2 domain. Residues 140 to 163 (SPVGRTSRASKKVHNFGKRSNSIK) are disordered. Positions 147-156 (RASKKVHNFG) are enriched in basic residues. The region spanning 169-268 (PVVRRGWLYK…WMKAMLDAAL (100 aa)) is the PH domain. A Glycyl lysine isopeptide (Lys-Gly) (interchain with G-Cter in SUMO2) cross-link involves residue Lys301. Phosphoserine occurs at positions 382 and 410. Residues Thr438 and Thr460 each carry the phosphothreonine modification. Residues 459-495 (RTLPRNSKTRPESICSVTPSTHDKTLGPGAEEKRRSM) form a disordered region. The span at 479-495 (THDKTLGPGAEEKRRSM) shows a compositional bias: basic and acidic residues. A phosphoserine mark is found at Ser568, Ser607, Ser809, Ser855, Ser933, and Ser937. Disordered regions lie at residues 928–978 (GASD…PATE) and 1025–1116 (RNKD…FMCV). Positions 930–949 (SDQSPLQSPSNLRDNPFRTT) are enriched in polar residues. Residues 952 to 978 (RRRDDKELDTAIRENDVKPDHETPATE) are compositionally biased toward basic and acidic residues. The segment covering 1036-1046 (FSPQDETQTAN) has biased composition (polar residues). Residues 1047–1061 (HKPEEHPEENTKNSV) show a composition bias toward basic and acidic residues. Residues 1070 to 1085 (SYESTPEVSRGNQTMA) are compositionally biased toward polar residues. Over residues 1088 to 1101 (SLSPSPESSASPVP) the composition is skewed to low complexity.

Highly expressed in heart and kidney.

Its subcellular location is the cytoplasm. This Homo sapiens (Human) protein is Pleckstrin homology domain-containing family A member 5 (PLEKHA5).